The chain runs to 187 residues: Protein SCM4 (187 aa).

A run of 3 helical transmembrane segments spans residues 11–31 (IAVSSLGLYAGILTSSTVISI), 45–65 (VLCTLGCWSTVLGGLATGAFG), and 80–100 (LLCGLGVAPLSAAYLYLVSLF). Residues 114–134 (DLEKQKDEKLPQHHPEVKDGE) show a composition bias toward basic and acidic residues. The tract at residues 114–135 (DLEKQKDEKLPQHHPEVKDGEA) is disordered. Residues 162–182 (MSLHMSIVTGITIFTFGKCIL) traverse the membrane as a helical segment.

The protein belongs to the ATG33 family.

The protein resides in the membrane. This is Protein SCM4 (SCM4) from Saccharomyces cerevisiae (strain ATCC 204508 / S288c) (Baker's yeast).